The primary structure comprises 234 residues: MKNMLLMSGSKYKDTAYLVHTLPWLAQFLADYKGKKVAFVPYAGVRRSFDEYETTVKNALQSLELEIVSVHRGKQHRDIIEQADVIAIGGGNTFCLLKQMYEHDLLDAIRAKVNSGTPYFGWSAGANVAGSSIMTTNDMPITYPPSFNALNLFPHQINPHFISGKMQGHNGESREERLEEFLIVNPQSLVYAMPEGTALHIQGEQATVLGAQDILCFSEKMQLDTKAVNSTFNY.

Active-site charge relay system residues include S123, D138, and H160.

It belongs to the peptidase S51 family.

It is found in the cytoplasm. It catalyses the reaction Dipeptidase E catalyzes the hydrolysis of dipeptides Asp-|-Xaa. It does not act on peptides with N-terminal Glu, Asn or Gln, nor does it cleave isoaspartyl peptides.. In terms of biological role, hydrolyzes dipeptides containing N-terminal aspartate residues. May play a role in allowing the cell to use peptide aspartate to spare carbon otherwise required for the synthesis of the aspartate family of amino acids. In Actinobacillus pleuropneumoniae serotype 5b (strain L20), this protein is Peptidase E.